A 141-amino-acid polypeptide reads, in one-letter code: Protein C19orf12 homolog (141 aa).

The chain crosses the membrane as a helical span at residues 37–57; that stretch reads GLAFAGGLIGGPLGIAVGGAV.

The protein belongs to the C19orf12 family.

Its subcellular location is the mitochondrion. The protein resides in the mitochondrion membrane. It localises to the endoplasmic reticulum. The protein localises to the cytoplasm. It is found in the cytosol. The chain is Protein C19orf12 homolog from Danio rerio (Zebrafish).